The sequence spans 331 residues: DNA-directed RNA polymerase subunit alpha (331 aa).

The tract at residues Met-1–Leu-242 is alpha N-terminal domain (alpha-NTD). The tract at residues Val-258–Asn-331 is alpha C-terminal domain (alpha-CTD).

It belongs to the RNA polymerase alpha chain family. As to quaternary structure, homodimer. The RNAP catalytic core consists of 2 alpha, 1 beta, 1 beta' and 1 omega subunit. When a sigma factor is associated with the core the holoenzyme is formed, which can initiate transcription.

The catalysed reaction is RNA(n) + a ribonucleoside 5'-triphosphate = RNA(n+1) + diphosphate. Functionally, DNA-dependent RNA polymerase catalyzes the transcription of DNA into RNA using the four ribonucleoside triphosphates as substrates. In Malacoplasma penetrans (strain HF-2) (Mycoplasma penetrans), this protein is DNA-directed RNA polymerase subunit alpha.